Reading from the N-terminus, the 93-residue chain is Signal recognition particle 19 kDa protein (93 aa).

Belongs to the SRP19 family. Part of the signal recognition particle protein translocation system, which is composed of SRP and FtsY. Archaeal SRP consists of a 7S RNA molecule of 300 nucleotides and two protein subunits: SRP54 and SRP19.

The protein resides in the cytoplasm. Its function is as follows. Involved in targeting and insertion of nascent membrane proteins into the cytoplasmic membrane. Binds directly to 7S RNA and mediates binding of the 54 kDa subunit of the SRP. The sequence is that of Signal recognition particle 19 kDa protein from Haloquadratum walsbyi (strain DSM 16790 / HBSQ001).